The sequence spans 181 residues: Probable cobalt-precorrin-6B C(15)-methyltransferase (decarboxylating) (181 aa).

Residues T16, 40-44 (GCGSG), D61, and A89 each bind S-adenosyl-L-methionine.

This sequence belongs to the methyltransferase superfamily. Archaeal-type CbiT family.

The catalysed reaction is Co-precorrin-6B + S-adenosyl-L-methionine = Co-precorrin-7 + S-adenosyl-L-homocysteine + CO2. Its pathway is cofactor biosynthesis; adenosylcobalamin biosynthesis; cob(II)yrinate a,c-diamide from sirohydrochlorin (anaerobic route): step 8/10. Functionally, catalyzes the methylation of C-15 in cobalt-precorrin-6B followed by the decarboxylation of C-12 to form cobalt-precorrin-7. The sequence is that of Probable cobalt-precorrin-6B C(15)-methyltransferase (decarboxylating) from Methanococcus maripaludis (strain C7 / ATCC BAA-1331).